A 458-amino-acid polypeptide reads, in one-letter code: O-acyltransferase WSD (458 aa).

H133 serves as the catalytic Proton acceptor.

Belongs to the long-chain O-acyltransferase family.

It carries out the reaction a long chain fatty alcohol + a fatty acyl-CoA = a wax ester + CoA. The catalysed reaction is an acyl-CoA + a 1,2-diacyl-sn-glycerol = a triacyl-sn-glycerol + CoA. It functions in the pathway glycerolipid metabolism; triacylglycerol biosynthesis. Bifunctional wax ester synthase/diacylglycerol acyltransferase (WS and DGAT). Catalyzes the terminal and only committed step in triacylglycerol synthesis by using diacylglycerol and fatty acyl CoA as substrates. Required for storage lipid synthesis. WS uses C(12)-CoA to C(18)-CoA substrates whereas DGAT prefers C(20)-CoA. Upon expression in E.coli and Pseudomonas citronellolis (DSM 50332) both WS and DGAT activities increase. This Acinetobacter baylyi (strain ATCC 33305 / BD413 / ADP1) protein is O-acyltransferase WSD (wax-dgaT).